The sequence spans 417 residues: Gamma-glutamyl phosphate reductase (417 aa).

Belongs to the gamma-glutamyl phosphate reductase family.

Its subcellular location is the cytoplasm. It catalyses the reaction L-glutamate 5-semialdehyde + phosphate + NADP(+) = L-glutamyl 5-phosphate + NADPH + H(+). The protein operates within amino-acid biosynthesis; L-proline biosynthesis; L-glutamate 5-semialdehyde from L-glutamate: step 2/2. Its function is as follows. Catalyzes the NADPH-dependent reduction of L-glutamate 5-phosphate into L-glutamate 5-semialdehyde and phosphate. The product spontaneously undergoes cyclization to form 1-pyrroline-5-carboxylate. The polypeptide is Gamma-glutamyl phosphate reductase (Klebsiella pneumoniae (strain 342)).